A 261-amino-acid polypeptide reads, in one-letter code: Small ribosomal subunit protein uS2 (261 aa).

Residues 224 to 261 (GKQGQDDSEDVEKEMADKAAAENDDEESIEEVVEKSED) form a disordered region. The span at 245–254 (ENDDEESIEE) shows a compositional bias: acidic residues.

Belongs to the universal ribosomal protein uS2 family.

This chain is Small ribosomal subunit protein uS2, found in Lactobacillus gasseri (strain ATCC 33323 / DSM 20243 / BCRC 14619 / CIP 102991 / JCM 1131 / KCTC 3163 / NCIMB 11718 / NCTC 13722 / AM63).